A 1177-amino-acid chain; its full sequence is Lon protease homolog, mitochondrial (1177 aa).

Disordered stretches follow at residues 72–197 and 353–386; these read RTNS…KSPA and AKKA…DSST. Basic and acidic residues predominate over residues 103 to 150; that stretch reads RGRELWVQEKDKSDKPEKSDKPDKTDKTDKDKPEKQDKDKTDKPEKTK. Low complexity predominate over residues 154–182; it reads TPSSTASTGAGEAAAPPSAPPSGSGSSSS. The 303-residue stretch at 203 to 505 folds into the Lon N-terminal domain; it reads ILAVPISDRP…RALILLKREH (303 aa). Residues 353-383 show a composition bias toward basic and acidic residues; the sequence is AKKAKSGKTEDSKHDSKVTSKDGKETTEKYD. ATP is bound at residue 657–664; the sequence is GPPGVGKT. Residues 883–916 show a composition bias toward basic and acidic residues; sequence EKDKESAEKKTTKSKSKEVNEEPAAKEEKDKATE. The tract at residues 883–932 is disordered; that stretch reads EKDKESAEKKTTKSKSKEVNEEPAAKEEKDKATESAESSETKVGTKAPPV. The Lon proteolytic domain occupies 964–1150; sequence DPPPGVVMGL…QDVYDVVFQG (187 aa). Residues S1056 and K1099 contribute to the active site.

The protein belongs to the peptidase S16 family. As to quaternary structure, homohexamer or homoheptamer. Organized in a ring with a central cavity.

Its subcellular location is the mitochondrion matrix. It carries out the reaction Hydrolysis of proteins in presence of ATP.. Its function is as follows. ATP-dependent serine protease that mediates the selective degradation of misfolded, unassembled or oxidatively damaged polypeptides as well as certain short-lived regulatory proteins in the mitochondrial matrix. May also have a chaperone function in the assembly of inner membrane protein complexes. Participates in the regulation of mitochondrial gene expression and in the maintenance of the integrity of the mitochondrial genome. Binds to mitochondrial DNA in a site-specific manner. The polypeptide is Lon protease homolog, mitochondrial (Yarrowia lipolytica (strain CLIB 122 / E 150) (Yeast)).